Reading from the N-terminus, the 65-residue chain is Small ribosomal subunit protein bS21 (65 aa).

Belongs to the bacterial ribosomal protein bS21 family.

This is Small ribosomal subunit protein bS21 from Flavobacterium psychrophilum (strain ATCC 49511 / DSM 21280 / CIP 103535 / JIP02/86).